The chain runs to 438 residues: Glutaryl-CoA dehydrogenase, mitochondrial (438 aa).

The transit peptide at 1 to 44 directs the protein to the mitochondrion; sequence MALRGVSVQLLSRVPGLRVFRTWVSSAAQTEKVGRTQSQLAKSS. Substrate is bound by residues 138 to 139 and Ser186; that span reads RS. FAD is bound by residues 177-186, Ser186, and 212-214; these read FGLTEPNSGS and WIT. Lys240 is subject to N6-acetyllysine. 287–294 contributes to the substrate binding site; that stretch reads FGCLNNGR. Residues Arg319, Gln330, and 387–391 each bind FAD; that span reads DMLGG. The active-site Proton acceptor is Glu414. Gly415 is a binding site for substrate. FAD contacts are provided by residues Thr416, 416 to 418, and Phe434; that span reads THD.

It belongs to the acyl-CoA dehydrogenase family. In terms of assembly, homotetramer. FAD is required as a cofactor.

Its subcellular location is the mitochondrion matrix. The catalysed reaction is glutaryl-CoA + oxidized [electron-transfer flavoprotein] + 2 H(+) = (2E)-butenoyl-CoA + reduced [electron-transfer flavoprotein] + CO2. Its pathway is amino-acid metabolism; lysine degradation. The protein operates within amino-acid metabolism; tryptophan metabolism. In terms of biological role, catalyzes the oxidative decarboxylation of glutaryl-CoA to crotonyl-CoA and CO(2) in the degradative pathway of L-lysine, L-hydroxylysine, and L-tryptophan metabolism. It uses electron transfer flavoprotein as its electron acceptor. This is Glutaryl-CoA dehydrogenase, mitochondrial (GCDH) from Macaca fascicularis (Crab-eating macaque).